The following is a 467-amino-acid chain: Neurexin-1-beta (467 aa).

Positions 1-45 (MYQRMLRCGAELGSPGGGGGGAGGRLALLWIVPLTLSGLLGVAWG) are cleaved as a signal peptide. At 46 to 391 (ASSLGAHHIH…EVIRESSSTT (346 aa)) the chain is on the extracellular side. In terms of domain architecture, Laminin G-like spans 86-284 (YIFSKGGGQI…DANIAIVGNV (199 aa)). Positions 136 and 153 each coordinate Ca(2+). Residue asparagine 183 is glycosylated (N-linked (GlcNAc...) asparagine). Residues 200–229 (GNNDNERLAIARQRIPYRLGRVVDEWLLDK) are essential for interaction with CBLN1; modulates interaction affinity with NLGN1, NLGN2 and NLGN3; prevents interaction with DAG1/alpha-dystroglycan; modulates interaction with alpha-latrotoxin. Positions 235 and 237 each coordinate Ca(2+). Residues 318–380 (LATSTARRGN…AGGREPYPGS (63 aa)) form a disordered region. Residues 324-339 (RRGNSPTKEPVSQTTD) show a composition bias toward polar residues. Serine 345 carries an O-linked (Xyl...) (heparan sulfate) serine glycan. A helical transmembrane segment spans residues 392-412 (GMVVGIVAAAALCILILLYAM). The Cytoplasmic portion of the chain corresponds to 413 to 467 (YKYRNRDEGSYHVDESRNYISNSAQSNGAVVKEKQPSSAKSANKNKKNKDKEYYV). The interval 434–467 (NSAQSNGAVVKEKQPSSAKSANKNKKNKDKEYYV) is disordered. Residues serine 449, serine 450, and serine 453 each carry the phosphoserine modification.

This sequence belongs to the neurexin family. The cytoplasmic C-terminal region binds to CASK. Binds NLGN1, NLGN2 and NLGN3, DAG1 (alpha-dystroglycan) and alpha-latrotoxin. Binding to neuroligins is calcium-dependent, and the binding preference ranks as follow: NLGN1 &gt; NLGN4 &gt;&gt; NLGN3 &gt; NLGN2. Interacts with CBLN2 and more weakly with CBLN4. Interacts with CBLN1; interaction is CBLN1 hexamer form-dependent; CBLN1-binding is calcium-independent; isoform 1b does not interact with CBLN1. Interacts with CLSTN3. In terms of processing, O-glycosylated; contains heparan sulfate. Heparan sulfate attachment is required for synapse development by mediating interactions with neuroligins.

The protein resides in the presynaptic cell membrane. Neuronal cell surface protein involved in cell recognition and cell adhesion by forming intracellular junctions through binding to neuroligins. Plays a role in formation of synaptic junctions. Functions as part of a trans-synaptic complex by binding to cerebellins and postsynaptic GRID1. This interaction helps regulate the activity of NMDA and AMPA receptors at hippocampal synapses without affecting synapse formation. NRXN1B-CBLN2-GRID1 complex transduce presynaptic signals into postsynaptic NMDAR response. The protein is Neurexin-1-beta of Bos taurus (Bovine).